Consider the following 579-residue polypeptide: Matrix metalloproteinase-C (579 aa).

The N-terminal stretch at 1-17 (MRLIYVIAILLVSTCQA) is a signal peptide. Positions 18–129 (GFFSSLVSRF…SRCGVTDAPL (112 aa)) are cleaved as a propeptide — activation peptide. The segment at 32-51 (NSSPSSSSSSSSFSNSRKPS) is disordered. Over residues 33-50 (SSPSSSSSSSSFSNSRKP) the composition is skewed to low complexity. The Cysteine switch motif lies at 120–127 (SRCGVTDA). 5 residues coordinate Zn(2+): cysteine 122, histidine 200, aspartate 202, histidine 215, and histidine 225. N-linked (GlcNAc...) asparagine glycosylation occurs at asparagine 231. Zn(2+) is bound at residue histidine 254. Residue glutamate 255 is part of the active site. Residues histidine 258 and histidine 264 each contribute to the Zn(2+) site. The disordered stretch occupies residues 307-394 (SGRSSSGSDF…SSSGSSGGGC (88 aa)). Residues 315–324 (DFGGSSGGGS) are compositionally biased toward gly residues. Over residues 325–341 (RTTARPTTTTRSWFGRF) the composition is skewed to low complexity. Gly residues predominate over residues 373-394 (WGSGSGSSGRGGSSSGSSGGGC). 2 Hemopexin repeats span residues 395–437 (PSHI…FPSA) and 438–490 (PTPV…LGFS).

This sequence belongs to the peptidase M10A family. The cofactor is Zn(2+).

It is found in the secreted. It localises to the extracellular space. Its subcellular location is the extracellular matrix. With respect to regulation, inhibited by human TIMP1 and TIMP2 and the broad MMP inhibitors BB94 (Batimastat) and CT543. Metalloproteinase. The polypeptide is Matrix metalloproteinase-C (Caenorhabditis elegans).